Reading from the N-terminus, the 173-residue chain is Crossover junction endodeoxyribonuclease RuvC (173 aa).

Active-site residues include Asp-8, Glu-67, and Asp-139. 3 residues coordinate Mg(2+): Asp-8, Glu-67, and Asp-139.

Belongs to the RuvC family. As to quaternary structure, homodimer which binds Holliday junction (HJ) DNA. The HJ becomes 2-fold symmetrical on binding to RuvC with unstacked arms; it has a different conformation from HJ DNA in complex with RuvA. In the full resolvosome a probable DNA-RuvA(4)-RuvB(12)-RuvC(2) complex forms which resolves the HJ. Mg(2+) serves as cofactor.

It is found in the cytoplasm. It catalyses the reaction Endonucleolytic cleavage at a junction such as a reciprocal single-stranded crossover between two homologous DNA duplexes (Holliday junction).. Functionally, the RuvA-RuvB-RuvC complex processes Holliday junction (HJ) DNA during genetic recombination and DNA repair. Endonuclease that resolves HJ intermediates. Cleaves cruciform DNA by making single-stranded nicks across the HJ at symmetrical positions within the homologous arms, yielding a 5'-phosphate and a 3'-hydroxyl group; requires a central core of homology in the junction. The consensus cleavage sequence is 5'-(A/T)TT(C/G)-3'. Cleavage occurs on the 3'-side of the TT dinucleotide at the point of strand exchange. HJ branch migration catalyzed by RuvA-RuvB allows RuvC to scan DNA until it finds its consensus sequence, where it cleaves and resolves the cruciform DNA. The protein is Crossover junction endodeoxyribonuclease RuvC of Salmonella paratyphi C (strain RKS4594).